The sequence spans 493 residues: 11S globulin seed storage protein G3 (493 aa).

The first 20 residues, 1 to 20 (MASKATLLLAFTLLFATCIA), serve as a signal peptide directing secretion. Cystine bridges form between Cys-32-Cys-65 and Cys-103-Cys-312. Positions 37–248 (IEALEPIEVI…SFNVDQETAQ (212 aa)) constitute a Cupin type-1 1 domain. 2 disordered regions span residues 190–229 (PQAQ…NIFN) and 269–305 (IVRP…GWSN). Low complexity-rich tracts occupy residues 191–221 (QAQA…QGQG) and 280–298 (RQQQ…QQQG). The region spanning 318–467 (VNIDNPSQAD…RYQLSREEAQ (150 aa)) is the Cupin type-1 2 domain.

This sequence belongs to the 11S seed storage protein (globulins) family. Hexamer; each subunit is composed of an acidic and a basic chain derived from a single precursor and linked by a disulfide bond.

Functionally, this is a seed storage protein. The chain is 11S globulin seed storage protein G3 (HAG3) from Helianthus annuus (Common sunflower).